The following is a 356-amino-acid chain: Nuclear hormone receptor family member nhr-169 (356 aa).

The segment at residues 16–90 (DPICSVCNFS…AGMKRSLVKE (75 aa)) is a DNA-binding region (nuclear receptor). 2 NR C4-type zinc fingers span residues 19-40 (CSVC…CSAC) and 56-72 (CKKD…CRAC). Residues 144-356 (DVSKILKTTP…KLYLHMGLPF (213 aa)) enclose the NR LBD domain.

The protein belongs to the nuclear hormone receptor family.

The protein resides in the nucleus. Functionally, orphan nuclear receptor. The chain is Nuclear hormone receptor family member nhr-169 (nhr-169) from Caenorhabditis elegans.